Here is a 425-residue protein sequence, read N- to C-terminus: Serine--tRNA ligase (425 aa).

The disordered stretch occupies residues 41-70; sequence TERSQLQARSNQVGKQVGEKIKSGSDPKGT. Residues 44–54 show a composition bias toward polar residues; sequence SQLQARSNQVG. The segment covering 57-70 has biased composition (basic and acidic residues); it reads VGEKIKSGSDPKGT. Residue 234-236 coordinates L-serine; sequence TSE. Residue 265 to 267 participates in ATP binding; sequence RRE. Glutamate 288 contributes to the L-serine binding site. An ATP-binding site is contributed by 352–355; it reads EISS. Serine 388 is a binding site for L-serine.

The protein belongs to the class-II aminoacyl-tRNA synthetase family. Type-1 seryl-tRNA synthetase subfamily. Homodimer. The tRNA molecule binds across the dimer.

Its subcellular location is the cytoplasm. The enzyme catalyses tRNA(Ser) + L-serine + ATP = L-seryl-tRNA(Ser) + AMP + diphosphate + H(+). It carries out the reaction tRNA(Sec) + L-serine + ATP = L-seryl-tRNA(Sec) + AMP + diphosphate + H(+). The protein operates within aminoacyl-tRNA biosynthesis; selenocysteinyl-tRNA(Sec) biosynthesis; L-seryl-tRNA(Sec) from L-serine and tRNA(Sec): step 1/1. Catalyzes the attachment of serine to tRNA(Ser). Is also able to aminoacylate tRNA(Sec) with serine, to form the misacylated tRNA L-seryl-tRNA(Sec), which will be further converted into selenocysteinyl-tRNA(Sec). In Trichodesmium erythraeum (strain IMS101), this protein is Serine--tRNA ligase.